Reading from the N-terminus, the 419-residue chain is Napsin-A (419 aa).

The signal sequence occupies residues 1 to 16; it reads MSPLLLLLLCLLLGNL. A Peptidase A1 domain is found at 73–394; sequence YFGTIGLGTP…KNVGPRVGLA (322 aa). Residue N85 is glycosylated (N-linked (GlcNAc...) asparagine). D91 is an active-site residue. Residues C104 and C111 are joined by a disulfide bond. N-linked (GlcNAc...) asparagine glycosylation is found at N128 and N149. C269 and C273 are oxidised to a cystine. The active site involves D278. A disulfide bridge links C312 with C349. Residue N331 is glycosylated (N-linked (GlcNAc...) asparagine). The segment at 391–419 is disordered; that stretch reads VGLARAQSRSTDRAERRTTQAQFFKRRPG.

The protein belongs to the peptidase A1 family. In terms of tissue distribution, expressed at the highest levels in the kidney, at a moderate level in the lung, and at low levels in the spleen and adipose tissue.

Its subcellular location is the secreted. May be involved in processing of pneumocyte surfactant precursors. The polypeptide is Napsin-A (Napsa) (Mus musculus (Mouse)).